The following is a 354-amino-acid chain: RH-like protein (354 aa).

A run of 8 helical transmembrane segments spans residues 11 to 31 (GCLP…FFFF), 45 to 65 (VATY…LGFL), 77 to 97 (VAFN…LDGF), 125 to 145 (ISVG…MVLV), 167 to 187 (VNIM…AWCL), 209 to 229 (AMLG…ALLT), 238 to 258 (VFNT…VSSL), and 287 to 307 (LISS…ISIG).

This sequence belongs to the ammonium transporter (TC 2.A.49) family. Rh subfamily.

The protein resides in the membrane. In terms of biological role, may be part of an oligomeric complex which is likely to have a transport or channel function in the erythrocyte membrane. This chain is RH-like protein, found in Hylobates pileatus (Pileated gibbon).